Reading from the N-terminus, the 740-residue chain is ATP-dependent RNA helicase DDX1 (740 aa).

A necessary for interaction with HNRNPK region spans residues 1–295 (MAAFSEMGVM…APKALIVEPS (295 aa)). The tract at residues 1-448 (MAAFSEMGVM…DTVHHVVVPV (448 aa)) is interaction with dsRNA. The segment at 1-525 (MAAFSEMGVM…KIDCDNLEQY (525 aa)) is necessary for interaction with RELA. The 427-residue stretch at 2 to 428 (AAFSEMGVMP…SEKIMHFPTW (427 aa)) folds into the Helicase ATP-binding domain. 46–53 (AETGSGKT) lines the ATP pocket. One can recognise a B30.2/SPRY domain in the interval 70 to 247 (DQQEGKKGKT…LKFNFGEEEF (178 aa)). An N6-acetyllysine mark is found at Lys-239 and Lys-268. At Lys-281 the chain carries N6-acetyllysine; alternate. Lys-281 participates in a covalent cross-link: Glycyl lysine isopeptide (Lys-Gly) (interchain with G-Cter in SUMO2); alternate. The short motif at 370 to 373 (DEAD) is the DEAD box element. Ser-481 is modified (phosphoserine). The region spanning 493–681 (KGEYAVRAIK…QVEPDIKVPV (189 aa)) is the Helicase C-terminal domain. Positions 525–740 (YFMQQGGGPD…YLPNQLFRTF (216 aa)) are necessary for interaction with HNRNPK.

This sequence belongs to the DEAD box helicase family. DDX1 subfamily. In terms of assembly, found in a multi-helicase-TICAM1 complex at least composed of DHX36, DDX1, DDX21 and TICAM1; this complex exists in resting cells with or without poly(I:C) RNA ligand stimulation. Interacts with DHX36. Interacts (via B30.2/SPRY domain) with DDX21 (via N-terminus); this interaction serves as bridges to TICAM1. Interacts with FAM98A (via N- and C-terminus). Interacts with PHF5A (via C-terminus). Interacts with MBNL1. Interacts with CSTF2. Interacts with HNRNPK. Interacts with ATM. Interacts with RELA (via C-terminus). Component of the tRNA-splicing ligase complex. Interacts with PQBP1. Interacts with ERCC6. Post-translationally, phosphorylated by ATM kinase; phosphorylation is increased in response to ionizing radiation (IR).

The protein localises to the nucleus. It localises to the cytoplasm. Its subcellular location is the cytoplasmic granule. The protein resides in the cytosol. It is found in the mitochondrion. The enzyme catalyses ATP + H2O = ADP + phosphate + H(+). Its function is as follows. Acts as an ATP-dependent RNA helicase, able to unwind both RNA-RNA and RNA-DNA duplexes. Possesses 5' single-stranded RNA overhang nuclease activity. Possesses ATPase activity on various RNA, but not DNA polynucleotides. May play a role in RNA clearance at DNA double-strand breaks (DSBs), thereby facilitating the template-guided repair of transcriptionally active regions of the genome. Together with RELA, acts as a coactivator to enhance NF-kappa-B-mediated transcriptional activation. Acts as a positive transcriptional regulator of cyclin CCND2 expression. Binds to the cyclin CCND2 promoter region. Associates with chromatin at the NF-kappa-B promoter region via association with RELA. Binds to poly(A) RNA. May be involved in 3'-end cleavage and polyadenylation of pre-mRNAs. Component of the tRNA-splicing ligase complex required to facilitate the enzymatic turnover of catalytic subunit RTCB: together with archease (ZBTB8OS), acts by facilitating the guanylylation of RTCB, a key intermediate step in tRNA ligation. Component of a multi-helicase-TICAM1 complex that acts as a cytoplasmic sensor of viral double-stranded RNA (dsRNA) and plays a role in the activation of a cascade of antiviral responses including the induction of pro-inflammatory cytokines via the adapter molecule TICAM1. Specifically binds (via helicase ATP-binding domain) on both short and long poly(I:C) dsRNA. This is ATP-dependent RNA helicase DDX1 (DDX1) from Macaca fascicularis (Crab-eating macaque).